The chain runs to 156 residues: 6,7-dimethyl-8-ribityllumazine synthase (156 aa).

Residues phenylalanine 23, 57-59 (AFE), and 81-83 (AVI) contribute to the 5-amino-6-(D-ribitylamino)uracil site. 86–87 (ST) provides a ligand contact to (2S)-2-hydroxy-3-oxobutyl phosphate. Histidine 89 serves as the catalytic Proton donor. 5-amino-6-(D-ribitylamino)uracil is bound at residue phenylalanine 114. Arginine 128 contributes to the (2S)-2-hydroxy-3-oxobutyl phosphate binding site.

The protein belongs to the DMRL synthase family.

It catalyses the reaction (2S)-2-hydroxy-3-oxobutyl phosphate + 5-amino-6-(D-ribitylamino)uracil = 6,7-dimethyl-8-(1-D-ribityl)lumazine + phosphate + 2 H2O + H(+). The protein operates within cofactor biosynthesis; riboflavin biosynthesis; riboflavin from 2-hydroxy-3-oxobutyl phosphate and 5-amino-6-(D-ribitylamino)uracil: step 1/2. In terms of biological role, catalyzes the formation of 6,7-dimethyl-8-ribityllumazine by condensation of 5-amino-6-(D-ribitylamino)uracil with 3,4-dihydroxy-2-butanone 4-phosphate. This is the penultimate step in the biosynthesis of riboflavin. In Brachyspira hyodysenteriae (strain ATCC 49526 / WA1), this protein is 6,7-dimethyl-8-ribityllumazine synthase.